The sequence spans 674 residues: Probable copper-transporting P-type ATPase B (674 aa).

The tract at residues 1–22 (MNHSNQMHHDNHASHDHHSGHA) is disordered. The span at 7–19 (MHHDNHASHDHHS) shows a compositional bias: basic and acidic residues. The next 6 membrane-spanning stretches (helical) occupy residues 32–52 (FFVS…MGVN), 57–77 (FTFP…FFYG), 95–115 (GMMT…LYAF), 127–147 (TMDF…GHWI), 284–304 (GYLF…WMLI), and 315–335 (LVTV…PLVT). The 4-aspartylphosphate intermediate role is filled by Asp367. Mg(2+)-binding residues include Asp565 and Asp569. A run of 2 helical transmembrane segments spans residues 623–645 (LWWG…AFIG) and 649–671 (SPAI…AFTL).

Belongs to the cation transport ATPase (P-type) (TC 3.A.3) family. Type IB subfamily.

The protein localises to the cell membrane. The enzyme catalyses Cu(+)(in) + ATP + H2O = Cu(+)(out) + ADP + phosphate + H(+). Involved in copper transport. The polypeptide is Probable copper-transporting P-type ATPase B (copB) (Staphylococcus aureus (strain USA300 / TCH1516)).